The following is a 276-amino-acid chain: MGHMVNAVKQIPTFLDLGANALEMDVTFKNEEPTYTYHGVPCDAFRDCIRWEYFNVFAKTLREYTTPGFDKYREQLILLVFDLKTGDMNNAQARTAGVNTAKQLLQYYWNNDNNGGRAYVVLSIPDIAQHELIKGFKETLKKEGHENLLDKVGYDFSGPYLPRLPTLDETHEAFKKAGVEGHVWLSDGLTNFSPLGDMARLKEAIKSRDSANGFINKIYYWSVDKVSTAEKALKVGVDGIVTNHPDVIIGVLNENGFKDKYRLATYDDDPWETFGK.

Residue His3 is part of the active site. The Mg(2+) site is built by Glu23 and Asp25. His38 (nucleophile) is an active-site residue. Cys42 and Cys48 are joined by a disulfide. Asp82 serves as a coordination point for Mg(2+).

Belongs to the arthropod phospholipase D family. Class I subfamily. Requires Mg(2+) as cofactor. Expressed by the venom gland.

It localises to the secreted. The catalysed reaction is an N-(acyl)-sphingosylphosphocholine = an N-(acyl)-sphingosyl-1,3-cyclic phosphate + choline. The enzyme catalyses an N-(acyl)-sphingosylphosphoethanolamine = an N-(acyl)-sphingosyl-1,3-cyclic phosphate + ethanolamine. It catalyses the reaction a 1-acyl-sn-glycero-3-phosphocholine = a 1-acyl-sn-glycero-2,3-cyclic phosphate + choline. It carries out the reaction a 1-acyl-sn-glycero-3-phosphoethanolamine = a 1-acyl-sn-glycero-2,3-cyclic phosphate + ethanolamine. Functionally, dermonecrotic toxins cleave the phosphodiester linkage between the phosphate and headgroup of certain phospholipids (sphingolipid and lysolipid substrates), forming an alcohol (often choline) and a cyclic phosphate. This toxin acts on sphingomyelin (SM). It may also act on ceramide phosphoethanolamine (CPE), lysophosphatidylcholine (LPC) and lysophosphatidylethanolamine (LPE), but not on lysophosphatidylserine (LPS), and lysophosphatidylglycerol (LPG). It acts by transphosphatidylation, releasing exclusively cyclic phosphate products as second products. Induces dermonecrosis, hemolysis, increased vascular permeability, edema, inflammatory response, and platelet aggregation. The sequence is that of Dermonecrotic toxin Ls4SicTox-alphaIII1i from Loxosceles sp. (strain 4 GJB-2008) (Recluse spider).